Consider the following 347-residue polypeptide: Phenylalanine--tRNA ligase alpha subunit (347 aa).

Glutamate 261 serves as a coordination point for Mg(2+).

This sequence belongs to the class-II aminoacyl-tRNA synthetase family. Phe-tRNA synthetase alpha subunit type 1 subfamily. In terms of assembly, tetramer of two alpha and two beta subunits. Mg(2+) serves as cofactor.

Its subcellular location is the cytoplasm. The enzyme catalyses tRNA(Phe) + L-phenylalanine + ATP = L-phenylalanyl-tRNA(Phe) + AMP + diphosphate + H(+). The polypeptide is Phenylalanine--tRNA ligase alpha subunit (Streptococcus uberis (strain ATCC BAA-854 / 0140J)).